The chain runs to 197 residues: Large ribosomal subunit protein bL25 (197 aa).

It belongs to the bacterial ribosomal protein bL25 family. CTC subfamily. Part of the 50S ribosomal subunit; part of the 5S rRNA/L5/L18/L25 subcomplex. Contacts the 5S rRNA. Binds to the 5S rRNA independently of L5 and L18.

Its function is as follows. This is one of the proteins that binds to the 5S RNA in the ribosome where it forms part of the central protuberance. The sequence is that of Large ribosomal subunit protein bL25 from Hydrogenobaculum sp. (strain Y04AAS1).